Consider the following 171-residue polypeptide: Non-specific lipid transfer protein GPI-anchored 19 (171 aa).

Residues 1–18 (MILAILALVIATFLYGGA) form the signal peptide. Intrachain disulfides connect Cys-25-Cys-66, Cys-35-Cys-50, Cys-51-Cys-93, and Cys-64-Cys-103. N-linked (GlcNAc...) asparagine glycosylation is found at Asn-72 and Asn-82. Residues 113-149 (LPANTPVGSPRSAPSPSGTTSPANTPSGSKKFPLSNE) form a disordered region. Residues 118–141 (PVGSPRSAPSPSGTTSPANTPSGS) are compositionally biased toward low complexity. Ser-147 carries GPI-anchor amidated serine lipidation. An N-linked (GlcNAc...) asparagine glycan is attached at Asn-148. A propeptide spans 148–171 (NESSSKSNVIILSFVSIALVLAII) (removed in mature form).

Belongs to the plant LTP family.

It localises to the cell membrane. Functionally, probable lipid transfer protein. The protein is Non-specific lipid transfer protein GPI-anchored 19 of Arabidopsis thaliana (Mouse-ear cress).